A 287-amino-acid polypeptide reads, in one-letter code: 4-hydroxybenzoate octaprenyltransferase (287 aa).

8 consecutive transmembrane segments (helical) span residues 21 to 39 (PIGT…WLAA), 95 to 115 (VLAL…TMNP), 116 to 136 (LTIG…FMKR), 138 to 158 (IPIP…MAYA), 161 to 181 (ANAL…WTIA), 213 to 233 (IIGA…QLSE), 234 to 251 (LGSS…LFVY), and 264 to 284 (CFQA…GVVI).

Belongs to the UbiA prenyltransferase family. The cofactor is Mg(2+).

The protein localises to the cell inner membrane. It catalyses the reaction all-trans-octaprenyl diphosphate + 4-hydroxybenzoate = 4-hydroxy-3-(all-trans-octaprenyl)benzoate + diphosphate. The protein operates within cofactor biosynthesis; ubiquinone biosynthesis. Catalyzes the prenylation of para-hydroxybenzoate (PHB) with an all-trans polyprenyl group. Mediates the second step in the final reaction sequence of ubiquinone-8 (UQ-8) biosynthesis, which is the condensation of the polyisoprenoid side chain with PHB, generating the first membrane-bound Q intermediate 3-octaprenyl-4-hydroxybenzoate. The sequence is that of 4-hydroxybenzoate octaprenyltransferase from Aeromonas hydrophila subsp. hydrophila (strain ATCC 7966 / DSM 30187 / BCRC 13018 / CCUG 14551 / JCM 1027 / KCTC 2358 / NCIMB 9240 / NCTC 8049).